Reading from the N-terminus, the 400-residue chain is WW domain-containing transcription regulator protein 1 (400 aa).

Lysine 46 is covalently cross-linked (Glycyl lysine isopeptide (Lys-Gly) (interchain with G-Cter in ubiquitin)). The tract at residues 52–117 (FFKEPDSGSH…QQHAHLRQQS (66 aa)) is disordered. Residues 61 to 70 (HSRQSSTDSS) show a composition bias toward polar residues. A Phosphoserine modification is found at serine 62. Position 89 is a phosphoserine; by LATS2 (serine 89). Serine 105 is modified (phosphoserine). Positions 124–157 (LPLPPGWEMTFTATGQRYFLNHIEKITTWQDPRK) constitute a WW domain. The segment at 222 to 400 (PNALTTQQQQ…NKSEPFLTWL (179 aa)) is required for interaction with PALS1. Positions 225 to 259 (LTTQQQQQQKLRLQRIQMERERIRMRQEELMRQEA) form a coiled coil. Position 295 is a phosphoserine (serine 295). Serine 311 is subject to Phosphoserine; by LATS2. The PDZ-binding signature appears at 394–400 (EPFLTWL).

Binds to SLC9A3R2 via the PDZ motif at the plasma membrane. Binds to YWHAZ in vivo and in vitro through the phosphoserine-binding motif RSHSSP. Interacts (via coiled-coil domain) with SMAD2 (via MH1 domain), SMAD3 and SMAD4. Interacts with MED15. Interacts with PAX8 and NKX2-1. Interacts with TEAD1, TEAD2, TEAD3 and TEAD4. Interacts (via WW domain) with PALS1. Interacts with LATS1. Interacts with YAP1 (when phosphorylated at 'Ser-127'). Interacts (via WW domain) with PRRG4 (via cytoplasmic domain). Interacts (via WW domain) with AMOTL2 (via PPXY motif); the interaction promotes WWTR1/TAZ localization to the cytoplasm and tight junctions, thereby inhibiting its transcriptional coactivator properties. Interacts (via WW domain) with AMOT isoform 1; the interaction facilitates translocation of WWTR1/TAZ to the cytoplasm. In terms of processing, phosphorylated by LATS2 and STK3/MST2. Phosphorylation by LATS2 results in creation of 14-3-3 binding sites, retention in the cytoplasm, and functional inactivation. Phosphorylation results in the inhibition of transcriptional coactivation through YWHAZ-mediated nuclear export. Phosphorylated in the nucleus by PRP4K; phosphorylation leads to nuclear exclusion. Ubiquitinated at Lys-46; leading to proteasomal degradation. Deubiquitinated and stabilized by UCHL1 at Lys-46; leading to inhibition of osteoclastogenesis. In terms of tissue distribution, highly expressed in kidney, heart, placenta and lung. Expressed in the thyroid tissue.

The protein resides in the nucleus. The protein localises to the cytoplasm. It is found in the cell membrane. Its subcellular location is the cell junction. It localises to the tight junction. Its function is as follows. Transcriptional coactivator which acts as a downstream regulatory target in the Hippo signaling pathway that plays a pivotal role in organ size control and tumor suppression by restricting proliferation and promoting apoptosis. The core of this pathway is composed of a kinase cascade wherein STK3/MST2 and STK4/MST1, in complex with its regulatory protein SAV1, phosphorylates and activates LATS1/2 in complex with its regulatory protein MOB1, which in turn phosphorylates and inactivates YAP1 oncoprotein and WWTR1/TAZ. WWTR1 enhances PAX8 and NKX2-1/TTF1-dependent gene activation. In conjunction with YAP1, involved in the regulation of TGFB1-dependent SMAD2 and SMAD3 nuclear accumulation. Plays a key role in coupling SMADs to the transcriptional machinery such as the mediator complex. Regulates embryonic stem-cell self-renewal, promotes cell proliferation and epithelial-mesenchymal transition. The sequence is that of WW domain-containing transcription regulator protein 1 from Homo sapiens (Human).